A 681-amino-acid polypeptide reads, in one-letter code: Threonine--tRNA ligase (681 aa).

Positions 3-97 constitute a TGS domain; sequence KQIQVTLPDG…EEDVQLALLT (95 aa). The catalytic stretch occupies residues 279–576; that stretch reads DHRVLGKQLD…LIEHYAGAFP (298 aa). Positions 372, 423, and 553 each coordinate Zn(2+).

Belongs to the class-II aminoacyl-tRNA synthetase family. As to quaternary structure, homodimer. Requires Zn(2+) as cofactor.

The protein localises to the cytoplasm. The catalysed reaction is tRNA(Thr) + L-threonine + ATP = L-threonyl-tRNA(Thr) + AMP + diphosphate + H(+). Functionally, catalyzes the attachment of threonine to tRNA(Thr) in a two-step reaction: L-threonine is first activated by ATP to form Thr-AMP and then transferred to the acceptor end of tRNA(Thr). Also edits incorrectly charged L-seryl-tRNA(Thr). This Acidobacterium capsulatum (strain ATCC 51196 / DSM 11244 / BCRC 80197 / JCM 7670 / NBRC 15755 / NCIMB 13165 / 161) protein is Threonine--tRNA ligase.